The sequence spans 90 residues: uncharacterized protein (90 aa).

The protein to E.coli RlpA.

This is an uncharacterized protein from Synechocystis sp. (strain ATCC 27184 / PCC 6803 / Kazusa).